The chain runs to 353 residues: ATP-dependent kinase YFH7 (353 aa).

ATP is bound at residue 31 to 39 (GPPGSGKST).

It belongs to the YFH7 family.

ATP-dependent kinase that could be involved in endoplasmic reticulum membrane assembly. The chain is ATP-dependent kinase YFH7 (YFH7) from Kluyveromyces lactis (strain ATCC 8585 / CBS 2359 / DSM 70799 / NBRC 1267 / NRRL Y-1140 / WM37) (Yeast).